A 485-amino-acid chain; its full sequence is Forkhead box protein N3 (485 aa).

Disordered regions lie at residues 1–54 (MGPV…KGGM) and 85–108 (PVQD…DAKQ). The segment covering 16-30 (ISVSSQCYRSSTLSN) has biased composition (polar residues). The fork-head DNA-binding region spans 113–209 (KPPYSFSCLI…QALKKTPYHP (97 aa)). Disordered stretches follow at residues 316 to 357 (MESE…ISSS) and 401 to 449 (PLVE…MKEA). Residues 338–357 (SSAKSANKRSSSPSDSISSS) are compositionally biased toward low complexity. Residues 410 to 422 (QHKKKQHLLKLRR) are compositionally biased toward basic residues.

As to expression, at early cleavage stages, localized within the animal half of the embryo. At gastrulation, expression expands over the whole embryo excluding the future endodermal cells of the blastopore. During neurulation, expressed in the prospective eye field and in the neural crest cells. Strongly enriched in the eye vesicles at stage 26. From stage 29 onwards, expressed predominantly in the eye, the branchial arches and the vagal ganglion. At stage 38, expressed throughout the head with strongest expression in the head mesenchyme and the eye lens.

The protein resides in the nucleus. Acts as a transcriptional repressor. May be involved in DNA damage-inducible cell cycle arrests (checkpoints). This chain is Forkhead box protein N3, found in Xenopus laevis (African clawed frog).